The chain runs to 508 residues: ATP synthase subunit alpha, chloroplastic (508 aa).

170 to 177 contacts ATP; that stretch reads GDRQTGKT.

Belongs to the ATPase alpha/beta chains family. F-type ATPases have 2 components, CF(1) - the catalytic core - and CF(0) - the membrane proton channel. CF(1) has five subunits: alpha(3), beta(3), gamma(1), delta(1), epsilon(1). CF(0) has four main subunits: a, b, b' and c.

The protein resides in the plastid. It localises to the chloroplast thylakoid membrane. It catalyses the reaction ATP + H2O + 4 H(+)(in) = ADP + phosphate + 5 H(+)(out). Its function is as follows. Produces ATP from ADP in the presence of a proton gradient across the membrane. The alpha chain is a regulatory subunit. This chain is ATP synthase subunit alpha, chloroplastic, found in Lactuca sativa (Garden lettuce).